The primary structure comprises 873 residues: Bifunctional uridylyltransferase/uridylyl-removing enzyme (873 aa).

The uridylyltransferase stretch occupies residues 1–332; it reads MKYLSPLSLS…HQGEQDDAII (332 aa). The segment at 333 to 692 is uridylyl-removing; sequence IDDDFQRRGR…ISKNASRGGT (360 aa). Residues 451–573 enclose the HD domain; it reads VDEHSIRLLK…VRDEERLDYL (123 aa). ACT domains follow at residues 693-777 and 800-873; these read EIFV…RPPR and LMEF…RLSS.

The protein belongs to the GlnD family. The cofactor is Mg(2+).

It carries out the reaction [protein-PII]-L-tyrosine + UTP = [protein-PII]-uridylyl-L-tyrosine + diphosphate. It catalyses the reaction [protein-PII]-uridylyl-L-tyrosine + H2O = [protein-PII]-L-tyrosine + UMP + H(+). Uridylyltransferase (UTase) activity is inhibited by glutamine, while glutamine activates uridylyl-removing (UR) activity. Its function is as follows. Modifies, by uridylylation and deuridylylation, the PII regulatory proteins (GlnB and homologs), in response to the nitrogen status of the cell that GlnD senses through the glutamine level. Under low glutamine levels, catalyzes the conversion of the PII proteins and UTP to PII-UMP and PPi, while under higher glutamine levels, GlnD hydrolyzes PII-UMP to PII and UMP (deuridylylation). Thus, controls uridylylation state and activity of the PII proteins, and plays an important role in the regulation of nitrogen assimilation and metabolism. This Aliivibrio fischeri (strain MJ11) (Vibrio fischeri) protein is Bifunctional uridylyltransferase/uridylyl-removing enzyme.